The following is a 117-amino-acid chain: Large ribosomal subunit protein bL19 (117 aa).

This sequence belongs to the bacterial ribosomal protein bL19 family.

In terms of biological role, this protein is located at the 30S-50S ribosomal subunit interface and may play a role in the structure and function of the aminoacyl-tRNA binding site. This chain is Large ribosomal subunit protein bL19, found in Alkalilimnicola ehrlichii (strain ATCC BAA-1101 / DSM 17681 / MLHE-1).